Reading from the N-terminus, the 152-residue chain is Probable prefoldin subunit 5 (152 aa).

It belongs to the prefoldin subunit alpha family. Heterohexamer of two PFD-alpha type and four PFD-beta type subunits.

Its function is as follows. Binds specifically to cytosolic chaperonin (c-CPN) and transfers target proteins to it. Binds to nascent polypeptide chain and promotes folding in an environment in which there are many competing pathways for nonnative proteins. In Caenorhabditis elegans, this protein is Probable prefoldin subunit 5 (pfd-5).